The chain runs to 485 residues: GTPase Der (485 aa).

EngA-type G domains are found at residues P3–E167 and P176–M349. GTP contacts are provided by residues G9–S16, D56–F60, N119–E122, G182–S189, D229–V233, and N294–D297. One can recognise a KH-like domain in the interval I350–E434. The tract at residues N435–K485 is disordered. Over residues R457–N469 the composition is skewed to basic and acidic residues. The span at R470–K485 shows a compositional bias: basic residues.

This sequence belongs to the TRAFAC class TrmE-Era-EngA-EngB-Septin-like GTPase superfamily. EngA (Der) GTPase family. Associates with the 50S ribosomal subunit.

In terms of biological role, GTPase that plays an essential role in the late steps of ribosome biogenesis. This Neisseria meningitidis serogroup B (strain ATCC BAA-335 / MC58) protein is GTPase Der.